The sequence spans 181 residues: ADP-ribosylation factor 1 (181 aa).

An N-acetylglycine; alternate modification is found at G2. A lipid anchor (N-myristoyl glycine; alternate) is attached at G2. Residues 3 to 16 are important for the stable binding to the membranes; it reads NIFANLFKGLFGKK. GTP contacts are provided by residues 24–32, 126–129, and A160; these read GLDAAGKTT and NKQD.

This sequence belongs to the small GTPase superfamily. Arf family. In terms of assembly, interacts (when activated) with GGA1, GGA2 and GGA3; the interaction is required for proper subcellular location of GGA1, GGA2 and GGA3. Interacts with ARHGAP21, ASAP2, GGA1, HERC1, PRKCABP, PIP5K1B, TMED2, PSCD2, TMED10 and GRIA2. Interacts with ARFGAP1, which hydrolyzes GTP and thus, regulates its function. Interacts with PI4KB in the Golgi complex. Interacts with NCS1/FREQ in the Golgi and at the plasma membrane. Interacts with PLEKHA3. Interacts with PLEKHA8; the interaction, together with phosphatidylinositol 4-phosphate binding, is required for FAPP2-mediated glucosylceramide transfer activity. Interacts (activated) with PICK1 (via PDZ domain); the interaction blocks Arp2/3 complex inhibition. Interacts with IQSEC1. Interacts with C9orf72.

It localises to the golgi apparatus membrane. The protein resides in the synapse. Its subcellular location is the synaptosome. It is found in the postsynaptic density. The enzyme catalyses GTP + H2O = GDP + phosphate + H(+). With respect to regulation, alternates between an inactive GDP-bound form and an active GTP-bound form. Activated by guanine nucleotide-exchange factors (GEFs) and inactivated by GTPase-activating proteins (GAPs). Small GTPase involved in protein trafficking between different compartments. Modulates vesicle budding and uncoating within the Golgi complex. In its GTP-bound form, triggers the recruitment of coatomer proteins to the Golgi membrane. The hydrolysis of ARF1-bound GTP, which is mediated by ARFGAPs proteins, is required for dissociation of coat proteins from Golgi membranes and vesicles. The GTP-bound form interacts with PICK1 to limit PICK1-mediated inhibition of Arp2/3 complex activity; the function is linked to AMPA receptor (AMPAR) trafficking, regulation of synaptic plasticity of excitatory synapses and spine shrinkage during long-term depression (LTD). Plays a key role in the regulation of intestinal stem cells and gut microbiota, and is essential for maintaining intestinal homeostasis. Also plays a critical role in mast cell expansion but not in mast cell maturation by facilitating optimal mTORC1 activation. The protein is ADP-ribosylation factor 1 (ARF1) of Bos taurus (Bovine).